The sequence spans 191 residues: Reticulon-like protein B15 (191 aa).

One can recognise a Reticulon domain in the interval 13 to 191; the sequence is VADLCLWKDK…SKIPRAPKVE (179 aa). 3 consecutive transmembrane segments (helical) span residues 23–43, 47–67, and 122–142; these read INSG…EFME, VPLL…WAKF, and VAII…YICL.

The protein localises to the endoplasmic reticulum membrane. The chain is Reticulon-like protein B15 (RTNLB15) from Arabidopsis thaliana (Mouse-ear cress).